The primary structure comprises 240 residues: tRNA pseudouridine synthase B (240 aa).

Residue D48 is the Nucleophile of the active site.

This sequence belongs to the pseudouridine synthase TruB family. Type 1 subfamily.

The enzyme catalyses uridine(55) in tRNA = pseudouridine(55) in tRNA. Responsible for synthesis of pseudouridine from uracil-55 in the psi GC loop of transfer RNAs. This chain is tRNA pseudouridine synthase B, found in Bacteroides thetaiotaomicron (strain ATCC 29148 / DSM 2079 / JCM 5827 / CCUG 10774 / NCTC 10582 / VPI-5482 / E50).